The following is a 176-amino-acid chain: tRNA (adenine(37)-N6)-methyltransferase (176 aa).

The 94-residue stretch at 1–94 (SFSHIWVQFV…YLPFVEAQPD (94 aa)) folds into the TsaA-like domain. Residues His-12, 12 to 13 (HG), Arg-40, Leu-50, and 74 to 77 (LDGT) contribute to the S-adenosyl-L-methionine site.

The protein belongs to the tRNA methyltransferase O family.

The catalysed reaction is N(6)-L-threonylcarbamoyladenosine(37) in tRNA + S-adenosyl-L-methionine = N(6)-methyl,N(6)-L-threonylcarbamoyladenosine(37) in tRNA + S-adenosyl-L-homocysteine + H(+). In terms of biological role, S-adenosyl-L-methionine-dependent methyltransferase responsible for the addition of the methyl group in the formation of N6-methyl-N6-threonylcarbamoyladenosine at position 37 (m(6)t(6)A37) of the tRNA anticodon loop of tRNA(Thr)(GGU). The methyl group of m(6)t(6)A37 appears to slightly improve the efficiency of the tRNA decoding ability. Binds to tRNA. The chain is tRNA (adenine(37)-N6)-methyltransferase from Eikenella corrodens.